A 42-amino-acid polypeptide reads, in one-letter code: Potassium channel toxin gamma-KTx 1.8 (42 aa).

Disulfide bonds link C5–C23, C11–C34, C20–C39, and C24–C41.

This sequence belongs to the ergtoxin family. Gamma-KTx 1 subfamily. Expressed by the venom gland.

The protein resides in the secreted. In terms of biological role, blocks in a reversible manner human and rat Kv11.1/KCNH2/ERG1 potassium channels. Also completely and irreversibly blocks rat Kv11.2/KCNH6/ERG2 and human Kv11.3/KCNH7/ERG3 channels. Also weakly inhibits Kir2.1/KCNJ2 and Kv1.2/KCNA2 potassium channels. The sequence is that of Potassium channel toxin gamma-KTx 1.8 from Centruroides elegans (Bark scorpion).